The chain runs to 180 residues: Anaerobic nitrite reductase GLB0 (180 aa).

Residues 23-172 form the Globin domain; that stretch reads TYSKENEQLV…LAEQVKAEMH (150 aa). Positions 56-60 match the Homodimerization motif; that stretch reads EIAPG. Heme b is bound by residues S66, K80, H84, K114, T118, and H119. A Homodimerization motif is present at residues 126–138; the sequence is DDQFEIVKEAILY.

The protein belongs to the plant globin family. In terms of assembly, homodimer. Heme b is required as a cofactor.

The protein resides in the cytoplasm. It localises to the nucleus. The enzyme catalyses Fe(III)-heme b-[protein] + nitric oxide + H2O = Fe(II)-heme b-[protein] + nitrite + 2 H(+). In terms of biological role, phytoglobin that reduces nitrite to nitric oxide (NO) under anoxic conditions (e.g. during flooding or in waterlogged soil). May not function as an oxygen storage or transport protein. Has an unusually high affinity for O(2) through an hexacoordinate heme iron because of a very low dissociation constant. This chain is Anaerobic nitrite reductase GLB0, found in Physcomitrium patens (Spreading-leaved earth moss).